The primary structure comprises 368 residues: Cyclic GMP-AMP synthase-like receptor (368 aa).

ATP is bound by residues Ser-60 and 72–74 (EYD). Glu-72, Asp-74, and Asp-190 together coordinate Mg(2+). GTP-binding positions include Asp-190 and 229–236 (RASFYRQE). Residues 233–236 (YRQE), Lys-254, and 268–272 (SYFIK) each bind ATP.

Belongs to the mab-21 family. Mg(2+) is required as a cofactor. It depends on Mn(2+) as a cofactor.

It catalyses the reaction GTP + ATP = 3',2'-cGAMP + 2 diphosphate. The catalysed reaction is GTP + ATP = pppA(2'-5')pG + diphosphate. It carries out the reaction pppA(2'-5')pG = 3',2'-cGAMP + diphosphate. The enzyme activity is specifically activated by double-stranded RNA (dsRNA). Functionally, nucleotidyltransferase that catalyzes the formation of cyclic GMP-AMP (3',2'-cGAMP) from ATP and GTP and plays a key role in innate immunity. Synthesizes 3',2'-cGAMP in a two-step reaction through production of the linear intermediate pppA(2'-5')pG. Acts as a key sensor of double-stranded RNA (dsRNA), the presence of dsRNA in the cytoplasm being a danger signal that triggers the immune responses. Directly binds dsRNA, activating the nucleotidyltransferase activity, leading to synthesis of 3',2'-cGAMP, a second messenger that binds to and activates Sting, thereby triggering the antiviral immune response via activation of the NF-kappa-B transcription factor Rel (Relish). The protein is Cyclic GMP-AMP synthase-like receptor of Lucilia cuprina (Green bottle fly).